Consider the following 304-residue polypeptide: uncharacterized protein (304 aa).

Positions 1–15 are cleaved as a signal peptide; it reads MTRPRPPLGPAMAGA. In terms of domain architecture, Thioredoxin spans 28-151; sequence NAAASTDADR…LSRWVDSLLS (124 aa).

This is an uncharacterized protein from Mycobacterium bovis (strain ATCC BAA-935 / AF2122/97).